A 467-amino-acid polypeptide reads, in one-letter code: Iroquois-class homeodomain protein irx-1-A (467 aa).

Positions 126–188 form a DNA-binding region, homeobox; TALE-type; that stretch reads DPGRPKNATR…NARRRLKKEN (63 aa). Disordered stretches follow at residues 197–306, 318–344, and 410–467; these read KEDD…PPHS, TSPD…QHPA, and SLSS…LPSA. 2 stretches are compositionally biased toward acidic residues: residues 215–225 and 233–244; these read EDDEEIDLESI and NDGEQSNEEEDE. The segment covering 245-262 has biased composition (basic and acidic residues); it reads KLEHLRQGEKESLKKESE. Over residues 415-431 the composition is skewed to basic and acidic residues; the sequence is KTPERTSPKHSDRENVP. A compositionally biased stretch (polar residues) spans 447-460; it reads RENTLSQQEGTSRI.

This sequence belongs to the TALE/IRO homeobox family. In terms of tissue distribution, expressed early in neural differentiation in the neural plate, and expression continues in the neural tube after neural fold closure. Expressed in the presumptive midbrain territory. Also expressed in the prospective neural crest and the preplacodal field, anterior to the neural plate. Strongly expressed in the profundal placode and weakly expressed in the trigeminal placode. Also expressed in the mesoderm in the Spemann organizer from the start of gastrulation, and subsequently in its derivatives; namely in the notochord as well as in the somites of stage 25 embryos, and the somites and notochord of tailbud embryos. Also expressed in specific and overlapping dynamic patterns with irx2 and irx3 during pronephric kidney development. Renal expression begins in the dorsal region of the pronephric anlage at mid neurula stage and continues to at least tailbud stages where expression is confined to the intermediate tubule segment IT1. Renal expression is maintained at tadpole stages.

It is found in the nucleus. Its function is as follows. Acts partially redundantly with other irx members in neural patterning. Required for formation of the posterior forebrain, midbrain, hindbrain, and to a lesser extent, spinal cord. Acts early in neural plate development to induce expression of some but not all proneural genes, and specify a neural precursor state. Also up-regulates repressors that prevent neuronal differentiation. Patterns the neuroectoderm in both the anterior/posterior and dorsal/ventral axes. Acts primarily as a transcriptional repressor during neural development, and binds to the bmp4 promoter to repress gene expression and thus mediate down-regulation of bmp4 by wnt signaling. Controls multiple processes through bmp4-repression including neural plate development, neural crest specification and Spemann organizer development. Involved in the specification of the preplacodal field at the anterior border of the neural plate. Regulates the genetic cascade of interactions that are necessary for positioning the isthmus organizer and the formation of the midbrain-hindbrain boundary. Required during at least two stages of pronephros kidney development; during neurula stages, maintains transcription of key renal genes to define the size and identity of the pronephric anlage, probably in part through regulation of bmp-signaling. Subsequently required for proper formation of the intermediate tubule segment of the pronephros. Acts principally as a transcriptional activator during pronephros development. This chain is Iroquois-class homeodomain protein irx-1-A (irx1-a), found in Xenopus laevis (African clawed frog).